Reading from the N-terminus, the 249-residue chain is MWIGVISLFPEMFRAITEHGVTGRAVKSGLLQIECWNPREFTHDKHRTVDDRPYGGGPGMLMMVQPLRDAIHAAKQAAGDGAKVIYLSPQGRKLTQAGVTELATNQKLILVAGRYEGIDERVIQTEVDEEWSIGDYVLSGGELPAMTLIDAVSRLVPGVLGDQASAEQDSFTDGLLDHPHYTRPELLDGLAVPEALTSGNHEVIRRWRLKQSLGRTWQRRPELINNLALTDEQESLLAEYVREVRDSVK.

Residues Gly113 and 133 to 138 (IGDYVL) contribute to the S-adenosyl-L-methionine site.

This sequence belongs to the RNA methyltransferase TrmD family. As to quaternary structure, homodimer.

It localises to the cytoplasm. It catalyses the reaction guanosine(37) in tRNA + S-adenosyl-L-methionine = N(1)-methylguanosine(37) in tRNA + S-adenosyl-L-homocysteine + H(+). Specifically methylates guanosine-37 in various tRNAs. This Aeromonas salmonicida (strain A449) protein is tRNA (guanine-N(1)-)-methyltransferase.